The primary structure comprises 473 residues: H(+)/Cl(-) exchange transporter ClcA (473 aa).

Over 1 to 32 (MKTDTSTFLAQQIVRLRRRDQIRRLMQRDKTP) the chain is Cytoplasmic. Residues 33-69 (LAILFMAAVVGTLTGLVGVAFEKAVSWVQNMRIGALV) form a helical membrane-spanning segment. Topologically, residues 70–76 (QVADHAF) are periplasmic. Residues 77–100 (LLWPLAFILSALLAMVGYFLVRKF) traverse the membrane as a helical segment. A Selectivity filter part_1 motif is present at residues 106 to 110 (GSGIP). Residue serine 107 participates in chloride binding. Residues 109–116 (IPEIEGAL) constitute an intramembrane region (helical). The Cytoplasmic segment spans residues 117-123 (EELRPVR). 2 helical membrane passes run 124-141 (WWRVLPVKFIGGMGTLGA) and 148-166 (EGPTVQIGGNLGRMVLDVF). The short motif at 146–150 (GREGP) is the Selectivity filter part_2 element. The Cytoplasmic portion of the chain corresponds to 167–176 (RMRSAEARHT). 2 consecutive intramembrane regions (helical) follow at residues 177 to 189 (LLATGAAAGLSAA) and 193 to 201 (PLAGILFII). Residues 202 to 214 (EEMRPQFRYNLIS) lie on the Cytoplasmic side of the membrane. A helical transmembrane segment spans residues 215 to 232 (IKAVFTGVIMSSIVFRIF). The Periplasmic segment spans residues 233–252 (NGEAPIIEVGKLSDAPVNTL). A helical transmembrane segment spans residues 253–281 (WLYLILGIIFGCVGPVFNSLVLRTQDMFQ). At 282-287 (RFHGGE) the chain is on the cytoplasmic side. A helical membrane pass occupies residues 288–309 (IKKWVLMGGAIGGLCGILGLIE). The Periplasmic portion of the chain corresponds to 310–329 (PEAAGGGFNLIPIAAAGNFS). A run of 2 helical transmembrane segments spans residues 330 to 349 (VGLLLFIFIARVVTTLLCFS) and 355 to 376 (GIFAPMLALGTLLGTAFGMAAA). A Selectivity filter part_3 motif is present at residues 355 to 359 (GIFAP). The chloride site is built by isoleucine 356 and phenylalanine 357. The Periplasmic segment spans residues 377 to 386 (VLFPQYHLEA). Residues 387 to 401 (GTFAIAGMGALMAAS) constitute an intramembrane region (helical). An intramembrane region (note=Loop between two helices) is located at residues 402–404 (VRA). Residues 405–416 (PLTGIVLVLEMT) constitute an intramembrane region (helical). An intramembrane region (note=Loop between two helices) is located at residues 417 to 421 (DNYQL). Residues 422–438 (ILPMIITCLGATLLAQF) traverse the membrane as a helical segment. At 439–473 (LGGKPLYSTILARTLAKQDAEQAAKSQNAPAGENT) the chain is on the cytoplasmic side. Residue tyrosine 445 participates in chloride binding.

This sequence belongs to the chloride channel (TC 2.A.49) family. ClcA subfamily. In terms of assembly, homodimer.

The protein resides in the cell inner membrane. It catalyses the reaction 2 chloride(in) + H(+)(out) = 2 chloride(out) + H(+)(in). Its function is as follows. Proton-coupled chloride transporter. Functions as antiport system and exchanges two chloride ions for 1 proton. Probably acts as an electrical shunt for an outwardly-directed proton pump that is linked to amino acid decarboxylation, as part of the extreme acid resistance (XAR) response. This Salmonella gallinarum (strain 287/91 / NCTC 13346) protein is H(+)/Cl(-) exchange transporter ClcA.